Here is an 81-residue protein sequence, read N- to C-terminus: Photosystem I iron-sulfur center (81 aa).

4Fe-4S ferredoxin-type domains follow at residues 2–31 and 37–68; these read AHTV…MVPW and GQIA…IRVY. Cys-11, Cys-14, Cys-17, Cys-21, Cys-48, Cys-51, Cys-54, and Cys-58 together coordinate [4Fe-4S] cluster.

The cyanobacterial PSI reaction center is composed of one copy each of PsaA,B,C,D,E,F,I,J,K,L,M and X, and forms trimeric complexes. [4Fe-4S] cluster serves as cofactor.

It is found in the cellular thylakoid membrane. The enzyme catalyses reduced [plastocyanin] + hnu + oxidized [2Fe-2S]-[ferredoxin] = oxidized [plastocyanin] + reduced [2Fe-2S]-[ferredoxin]. Apoprotein for the two 4Fe-4S centers FA and FB of photosystem I (PSI); essential for photochemical activity. FB is the terminal electron acceptor of PSI, donating electrons to ferredoxin. The C-terminus interacts with PsaA/B/D and helps assemble the protein into the PSI complex. Required for binding of PsaD and PsaE to PSI. PSI is a plastocyanin/cytochrome c6-ferredoxin oxidoreductase, converting photonic excitation into a charge separation, which transfers an electron from the donor P700 chlorophyll pair to the spectroscopically characterized acceptors A0, A1, FX, FA and FB in turn. This chain is Photosystem I iron-sulfur center (psaC), found in Synechococcus elongatus.